A 425-amino-acid chain; its full sequence is Enolase (425 aa).

Position 163 (glutamine 163) interacts with (2R)-2-phosphoglycerate. Glutamate 205 (proton donor) is an active-site residue. Aspartate 242, glutamate 285, and aspartate 312 together coordinate Mg(2+). (2R)-2-phosphoglycerate-binding residues include lysine 337, arginine 366, serine 367, and lysine 388. Lysine 337 (proton acceptor) is an active-site residue.

It belongs to the enolase family. It depends on Mg(2+) as a cofactor.

The protein localises to the cytoplasm. It is found in the secreted. It localises to the cell surface. It catalyses the reaction (2R)-2-phosphoglycerate = phosphoenolpyruvate + H2O. The protein operates within carbohydrate degradation; glycolysis; pyruvate from D-glyceraldehyde 3-phosphate: step 4/5. Its function is as follows. Catalyzes the reversible conversion of 2-phosphoglycerate (2-PG) into phosphoenolpyruvate (PEP). It is essential for the degradation of carbohydrates via glycolysis. This Ruegeria pomeroyi (strain ATCC 700808 / DSM 15171 / DSS-3) (Silicibacter pomeroyi) protein is Enolase.